A 271-amino-acid chain; its full sequence is Putative phosphoenolpyruvate synthase regulatory protein (271 aa).

152–159 is an ADP binding site; it reads GVSRSGKT.

Belongs to the pyruvate, phosphate/water dikinase regulatory protein family. PSRP subfamily.

The enzyme catalyses [pyruvate, water dikinase] + ADP = [pyruvate, water dikinase]-phosphate + AMP + H(+). It carries out the reaction [pyruvate, water dikinase]-phosphate + phosphate + H(+) = [pyruvate, water dikinase] + diphosphate. Its function is as follows. Bifunctional serine/threonine kinase and phosphorylase involved in the regulation of the phosphoenolpyruvate synthase (PEPS) by catalyzing its phosphorylation/dephosphorylation. This Dichelobacter nodosus (strain VCS1703A) protein is Putative phosphoenolpyruvate synthase regulatory protein.